The chain runs to 338 residues: UDP-N-acetylenolpyruvoylglucosamine reductase (338 aa).

The region spanning 17–188 (IAARTDWWID…MYVDYRLRLK (172 aa)) is the FAD-binding PCMH-type domain. Arg-164 is a catalytic residue. Ser-237 serves as the catalytic Proton donor. Glu-333 is a catalytic residue.

Belongs to the MurB family. FAD serves as cofactor.

The protein resides in the cytoplasm. It catalyses the reaction UDP-N-acetyl-alpha-D-muramate + NADP(+) = UDP-N-acetyl-3-O-(1-carboxyvinyl)-alpha-D-glucosamine + NADPH + H(+). It functions in the pathway cell wall biogenesis; peptidoglycan biosynthesis. Cell wall formation. This is UDP-N-acetylenolpyruvoylglucosamine reductase from Porphyromonas gingivalis (strain ATCC BAA-308 / W83).